The chain runs to 266 residues: uncharacterized protein (266 aa).

The PH domain maps to 35–131; it reads VLVGEGVLVK…WMLHIERCVT (97 aa). Residues 152–212 form an FYVE-type zinc finger; the sequence is DGEAVKCMVC…VCDHCFDSLS (61 aa). Cys-158, Cys-161, Cys-175, Cys-178, Cys-183, Cys-186, Cys-204, and Cys-207 together coordinate Zn(2+). Positions 213-266 are disordered; that stretch reads SATPGQEESEPKTGNRLHHEDSSSDSEDEVNGSGRSSNESRPTFYREDVQQPAT. Composition is skewed to basic and acidic residues over residues 221–234 and 256–266; these read SEPKTGNRLHHEDS and FYREDVQQPAT.

This is an uncharacterized protein from Caenorhabditis elegans.